A 117-amino-acid chain; its full sequence is uncharacterized protein (117 aa).

A compositionally biased stretch (polar residues) spans 1 to 19 (MTSNPSSSADQPLSGTTVP). A disordered region spans residues 1–28 (MTSNPSSSADQPLSGTTVPGSVPGKAPE). Helical transmembrane passes span 38 to 58 (AAVWSALIVGFLILILLLIFI) and 76 to 96 (LPLGVAILLAAVGGGLITVFA).

The protein resides in the cell membrane. This is an uncharacterized protein from Mycobacterium tuberculosis (strain ATCC 25618 / H37Rv).